We begin with the raw amino-acid sequence, 574 residues long: MYND-type zinc finger protein C31F10.10c (574 aa).

Disordered regions lie at residues 207–253 (DSGD…QDPR) and 283–307 (MTTP…DEID). Composition is skewed to polar residues over residues 243 to 253 (IYSNDSFQDPR) and 283 to 301 (MTTP…ASET). Residues 482-523 (NLLCNKWEEHSRQFAKCRRCRRTKYCSKECQHQAWPGHSRWC) form an MYND-type; degenerate zinc finger. The Zn(2+) site is built by Cys-498, Cys-501, His-519, and Cys-523. Residues 534–574 (KRESSKINSVTESESTASPAASVIPVGTESVTSSTQSDSRL) form a disordered region. Over residues 542-556 (SVTESESTASPAASV) the composition is skewed to low complexity. Positions 562–574 (ESVTSSTQSDSRL) are enriched in polar residues.

It belongs to the MUB1/samB family.

Its subcellular location is the nucleus. The protein resides in the cytoplasm. It is found in the cytoskeleton. The protein localises to the microtubule organizing center. It localises to the spindle pole body. This Schizosaccharomyces pombe (strain 972 / ATCC 24843) (Fission yeast) protein is MYND-type zinc finger protein C31F10.10c.